The primary structure comprises 346 residues: tRNA N6-adenosine threonylcarbamoyltransferase (346 aa).

Residues His-111 and His-115 each coordinate Fe cation. Residues 134-138 (LVSGG), Asp-167, Gly-180, and Asn-279 contribute to the substrate site. A Fe cation-binding site is contributed by Asp-307.

It belongs to the KAE1 / TsaD family. It depends on Fe(2+) as a cofactor.

It localises to the cytoplasm. The catalysed reaction is L-threonylcarbamoyladenylate + adenosine(37) in tRNA = N(6)-L-threonylcarbamoyladenosine(37) in tRNA + AMP + H(+). Functionally, required for the formation of a threonylcarbamoyl group on adenosine at position 37 (t(6)A37) in tRNAs that read codons beginning with adenine. Is involved in the transfer of the threonylcarbamoyl moiety of threonylcarbamoyl-AMP (TC-AMP) to the N6 group of A37, together with TsaE and TsaB. TsaD likely plays a direct catalytic role in this reaction. This Burkholderia mallei (strain ATCC 23344) protein is tRNA N6-adenosine threonylcarbamoyltransferase.